The following is a 1115-amino-acid chain: Iron-regulated protein FrpA (1115 aa).

Hemolysin-type calcium-binding repeat units lie at residues 755-772 (FGHN…NDTL), 773-790 (IGGA…SDTY), 901-918 (NGGL…NDLL), 919-936 (NGDA…NDTL), 937-954 (DGGE…NDAL), 955-972 (NGGE…NDTL), and 973-990 (IGGA…SDTY).

Belongs to the RTX prokaryotic toxin (TC 1.C.11) family.

It localises to the cell outer membrane. The protein resides in the secreted. Its function is as follows. May participate in the pathogenesis of meningococcal disease. The polypeptide is Iron-regulated protein FrpA (frpA) (Neisseria meningitidis serogroup C).